Reading from the N-terminus, the 230-residue chain is 2-amino-5-formylamino-6-ribosylaminopyrimidin-4(3H)-one 5'-monophosphate deformylase (230 aa).

Fe cation is bound by residues Glu29, His31, Asp40, and His109.

Belongs to the creatininase superfamily. FAPy deformylase family. In terms of assembly, homodimer. Fe(2+) serves as cofactor. Requires Zn(2+) as cofactor.

It catalyses the reaction 2-amino-5-formylamino-6-(5-phospho-D-ribosylamino)pyrimidin-4(3H)-one + H2O = 2,5-diamino-6-(1-D-ribosylamino)pyrimidin-4(3H)-one 5'-phosphate + formate + H(+). The protein operates within cofactor biosynthesis; coenzyme F420 biosynthesis. It functions in the pathway cofactor biosynthesis; riboflavin biosynthesis. Its function is as follows. Catalyzes the hydrolysis of the formamide of 2-amino-5-formylamino-6-ribosylamino-4(3H)-pyrimidinone 5'-monophosphate (FAPy) to form 2,5-diamino-6-ribosylamino-4(3H)-pyrimidinone 5'-phosphate (APy). This Methanobrevibacter smithii (strain ATCC 35061 / DSM 861 / OCM 144 / PS) protein is 2-amino-5-formylamino-6-ribosylaminopyrimidin-4(3H)-one 5'-monophosphate deformylase.